The following is a 265-amino-acid chain: 4-hydroxy-tetrahydrodipicolinate reductase (265 aa).

NAD(+) contacts are provided by residues 7–12 and Asp33; that span reads GASGRM. Residue Arg34 participates in NADP(+) binding. NAD(+)-binding positions include 96-98 and 120-123; these read GTT and AANM. His153 (proton donor/acceptor) is an active-site residue. His154 contacts (S)-2,3,4,5-tetrahydrodipicolinate. Lys157 (proton donor) is an active-site residue. 163 to 164 provides a ligand contact to (S)-2,3,4,5-tetrahydrodipicolinate; the sequence is GT.

Belongs to the DapB family.

It localises to the cytoplasm. It catalyses the reaction (S)-2,3,4,5-tetrahydrodipicolinate + NAD(+) + H2O = (2S,4S)-4-hydroxy-2,3,4,5-tetrahydrodipicolinate + NADH + H(+). The catalysed reaction is (S)-2,3,4,5-tetrahydrodipicolinate + NADP(+) + H2O = (2S,4S)-4-hydroxy-2,3,4,5-tetrahydrodipicolinate + NADPH + H(+). It functions in the pathway amino-acid biosynthesis; L-lysine biosynthesis via DAP pathway; (S)-tetrahydrodipicolinate from L-aspartate: step 4/4. Functionally, catalyzes the conversion of 4-hydroxy-tetrahydrodipicolinate (HTPA) to tetrahydrodipicolinate. This is 4-hydroxy-tetrahydrodipicolinate reductase from Burkholderia cenocepacia (strain ATCC BAA-245 / DSM 16553 / LMG 16656 / NCTC 13227 / J2315 / CF5610) (Burkholderia cepacia (strain J2315)).